The following is a 30-amino-acid chain: Rothein 3.4 (30 aa).

Leucine 30 is subject to Leucine amide.

This sequence belongs to the frog skin active peptide (FSAP) family. Rothein subfamily. As to expression, expressed by the skin dorsal glands.

The protein localises to the secreted. Functionally, lacks antimicrobial activity. Does not inhibit the formation of NO by neuronal nitric oxide. This Litoria rothii (Roth's tree frog) protein is Rothein 3.4.